The primary structure comprises 224 residues: Ribosomal RNA small subunit methyltransferase G (224 aa).

Residues Gly89, Leu94, 140–141, and Arg154 contribute to the S-adenosyl-L-methionine site; that span reads IE.

This sequence belongs to the methyltransferase superfamily. RNA methyltransferase RsmG family.

It localises to the cytoplasm. It catalyses the reaction guanosine(527) in 16S rRNA + S-adenosyl-L-methionine = N(7)-methylguanosine(527) in 16S rRNA + S-adenosyl-L-homocysteine. Specifically methylates the N7 position of guanine in position 527 of 16S rRNA. The protein is Ribosomal RNA small subunit methyltransferase G of Bordetella avium (strain 197N).